The chain runs to 65 residues: Large ribosomal subunit protein bL35 (65 aa).

This sequence belongs to the bacterial ribosomal protein bL35 family.

In Parasynechococcus marenigrum (strain WH8102), this protein is Large ribosomal subunit protein bL35.